Consider the following 521-residue polypeptide: MYGTNLLETMGKPTAGHLGMAVTFTILVAFTIHVLRMRFFHPLRRYPGPWLNSITQIPAAWALLRARQPKAYRELHEKYGPIVRVAPNELSFINVEAWDDIYGFLKSTPNFEKSPVFIGAVSPLNGQTGISLANNEEHTRQRRALAAPFTNRALLQQQDILRVHVDKLITALRAKARNKESVNMGEWYTYTTFDIIGDICFAEPFGCLDGGESNEWARAIINIFKAATWDQAIRRVAGTGTLLHKALVKIIIPAEAAQWRTIHFSNSKAKTLARLADPDRQHPDLIKHILDSEDSRAALSPTEIILNMVLFISAGSETTANTMTGWTYFMLRHPEARARATAEVRAAFASPRDIKWETVRALPYLNATLEEALRLFSPAPSNQPRVVPACGAVVAGCPLPSGTTVSVAPWAAVFSARNFADPERFAPERWLDEGGADPRYAADRRGASQPFSTGPRGCMGKNLAYFELRLVLAHLLWHFDLEPTDSAAGRECMRRWEQTDMDTYQTWMKPDLWVDLKEAQR.

Residues Ala15–Leu35 traverse the membrane as a helical segment. A glycan (N-linked (GlcNAc...) asparagine) is linked at Asn366. Cys458 lines the heme pocket.

The protein belongs to the cytochrome P450 family. It depends on heme as a cofactor.

The protein localises to the membrane. It participates in hormone biosynthesis. In terms of biological role, cytochrome P450 monooxygenase involved in the biosynthesis of abscisic acid (ABA), a phytohormone that acts antagonistically toward salicylic acid (SA), jasmonic acid (JA) and ethylene (ETH) signaling, to impede plant defense responses. During pathogen-host interaction, ABA plays a dual role in disease severity by increasing plant susceptibility and accelerating pathogenesis in the fungus itself. The first step of the pathway catalyzes the reaction from farnesyl diphosphate to alpha-ionylideneethane performed by the alpha-ionylideneethane synthase ABA3 via a three-step reaction mechanism involving 2 neutral intermediates, beta-farnesene and allofarnesene. The cytochrome P450 monooxygenase ABA1 might then be involved in the conversion of alpha-ionylideneethane to alpha-ionylideneacetic acid. Alpha-ionylideneacetic acid is further converted to abscisic acid in 2 steps involving the cytochrome P450 monooxygenase ABA2 and the short-chain dehydrogenase/reductase ABA4, via the intermediates 1'-deoxy-ABA or 1',4'-trans-diol-ABA, depending on the order of action of these 2 enzymes. ABA2 is responsible for the hydroxylation of carbon atom C-1' and ABA4 might be involved in the oxidation of the C-4' carbon atom. The chain is Cytochrome P450 monooxygenase ABA2 from Pyricularia oryzae (strain 70-15 / ATCC MYA-4617 / FGSC 8958) (Rice blast fungus).